Reading from the N-terminus, the 386-residue chain is MEDEMPKTLYVGNLSRDVTEALILQLFSQIGPCKNCKMIMDTAGNDPYCFVEFHEHRHAAAALAAMNGRKIMGKEVKVNWATTPSSQKKDTSSSTVVSTQRSQDHFHVFVGDLSPEITTEDIKAAFAPFGRISDARVVKDMATGKSKGYGFVSFFNKWDAENAIQQMGGQWLGGRQIRTNWATRKPPAPKSTYESNTKQLSYDEVVNQSSPSNCTVYCGGVTSGLTEQLMRQTFSPFGQIMEIRVFPDKGYSFVRFNSHESAAHAIVSVNGTTIEGHVVKCYWGKETLDMINPVQQQNQIGYPQPYGQWGQWYGNAQQIGQYMPNGWQVPAYGMYGQAWNQQGFNQTQSSAPWMGPNYGVQPPQGQNGSMLPNQPSGYRVAGYETQ.

Position 1 is an N-acetylmethionine (methionine 1). RRM domains are found at residues 7–83 (KTLY…WATT), 106–184 (FHVF…WATR), and 214–286 (CTVY…WGKE). A disordered region spans residues 354–386 (MGPNYGVQPPQGQNGSMLPNQPSGYRVAGYETQ). Polar residues predominate over residues 363 to 376 (PQGQNGSMLPNQPS).

Homooligomer; homooligomerization is induced by Zn(2+). Interacts with FASTK; the interactions leads to its phosphorylation. Interacts (via RRM1 and the C-terminal glutamine-rich (Q) sequence) with SNRPC/U1-C (via N-terminus); thereby facilitating spliceosomal U1 snRNP recruitment to 5' splice sites. Phosphorylated by FASTK; phosphorylation occurs after FAS ligation in FAS-mediated apoptosis and before DNA fragmentation. In terms of tissue distribution, expressed in heart, small intestine, kidney, liver, lung, skeletal muscle, testes, pancreas, and ovary (at protein level).

It is found in the nucleus. The protein resides in the cytoplasm. It localises to the stress granule. Its function is as follows. RNA-binding protein involved in the regulation of alternative pre-RNA splicing and mRNA translation by binding to uridine-rich (U-rich) RNA sequences. Binds to U-rich sequences immediately downstream from a 5' splice sites in a uridine-rich small nuclear ribonucleoprotein (U snRNP)-dependent fashion, thereby modulating alternative pre-RNA splicing. Preferably binds to the U-rich IAS1 sequence in a U1 snRNP-dependent manner; this binding is optimal if a 5' splice site is adjacent to IAS1. Activates the use of heterologous 5' splice sites; the activation depends on the intron sequence downstream from the 5' splice site, with a preference for a downstream U-rich sequence. By interacting with SNRPC/U1-C, promotes recruitment and binding of spliceosomal U1 snRNP to 5' splice sites followed by U-rich sequences, thereby facilitating atypical 5' splice site recognition by U1 snRNP. Activates splicing of alternative exons with weak 5' splice sites followed by a U-rich stretch on its own pre-mRNA and on TIAR mRNA. Acts as a modulator of alternative splicing for the apoptotic FAS receptor, thereby promoting apoptosis. Binds to the 5' splice site region of FAS intron 5 to promote accumulation of transcripts that include exon 6 at the expense of transcripts in which exon 6 is skipped, thereby leading to the transcription of a membrane-bound apoptotic FAS receptor, which promotes apoptosis. Binds to a conserved AU-rich cis element in COL2A1 intron 2 and modulates alternative splicing of COL2A1 exon 2. Also binds to the equivalent AT-rich element in COL2A1 genomic DNA, and may thereby be involved in the regulation of transcription. Binds specifically to a polypyrimidine-rich controlling element (PCE) located between the weak 5' splice site and the intronic splicing silencer of CFTR mRNA to promote exon 9 inclusion, thereby antagonizing PTB1 and its role in exon skipping of CFTR exon 9. Involved in the repression of mRNA translation by binding to AU-rich elements (AREs) located in mRNA 3' untranslated regions (3' UTRs), including target ARE-bearing mRNAs encoding TNF and PTGS2. Also participates in the cellular response to environmental stress, by acting downstream of the stress-induced phosphorylation of EIF2S1/EIF2A to promote the recruitment of untranslated mRNAs to cytoplasmic stress granules (SGs), leading to stress-induced translational arrest. Formation and recruitment to SGs is regulated by Zn(2+). Possesses nucleolytic activity against cytotoxic lymphocyte target cells. Displays enhanced splicing regulatory activity compared with TIA isoform Long. This Homo sapiens (Human) protein is Cytotoxic granule associated RNA binding protein TIA1 (TIA1).